We begin with the raw amino-acid sequence, 413 residues long: Palmitoyl-acyl carrier protein thioesterase, chloroplastic (413 aa).

The N-terminal 57 residues, 1–57 (MVATAVTSAFFPVTSSPDSSDSKNKKLGSIKSKPSVSSGSLQVKANAQAPPKINGTV), are a transit peptide targeting the chloroplast. Residues 12–79 (PVTSSPDSSD…DGASSPPPRT (68 aa)) are disordered. A compositionally biased stretch (low complexity) spans 29–40 (SIKSKPSVSSGS). Residues N310, H312, and C347 contribute to the active site. The tract at residues 394–413 (WRPKHAKSSANMDQITAKRA) is disordered.

Belongs to the acyl-ACP thioesterase family.

It is found in the plastid. The protein resides in the chloroplast. It catalyses the reaction hexadecanoyl-[ACP] + H2O = hexadecanoate + holo-[ACP] + H(+). Its function is as follows. Plays an essential role in chain termination during de novo fatty acid synthesis. High thioesterase activity for palmitoyl-ACP versus other acyl-ACPs. The chain is Palmitoyl-acyl carrier protein thioesterase, chloroplastic (FATB1) from Gossypium hirsutum (Upland cotton).